The primary structure comprises 328 residues: MSTKNFRVSDGDWICPDKKCGNVNFARRTSCNRCGREKTTEAKMMKAGGTEIGKTLAEKSRGLFSANDWQCKTCSNVNWARRSECNMCNTPKYAKLEERTGYGGGFNERENVEYIEREESDGEYDEFGRKKKKYRGKAVGPASILKEVEDKESEGEEEDEDEDLSKYKLDEDEDEDDADLSKYNLDASEEEDSNKKKSNRRSRSKSRSSHSRSSSRSSSPSSSRSRSRSRSRSSSSSQSRSRSTSRERSRSRGSKSSSRSHRGSSSPRKRSYSSSSSSPERNRKRSRSRSSSTGDPKKRRTRSRSPERHHRSSSGSSHSGSRSSSKKK.

The residue at position 9 (S9) is a Phosphoserine. A RanBP2-type 1 zinc finger spans residues 9–40; that stretch reads SDGDWICPDKKCGNVNFARRTSCNRCGREKTT. An N6-acetyllysine mark is found at K18, K54, and K92. The segment at 65-94 adopts a RanBP2-type 2 zinc-finger fold; it reads SANDWQCKTCSNVNWARRSECNMCNTPKYA. Residues 117 to 328 form a disordered region; sequence REESDGEYDE…SGSRSSSKKK (212 aa). Phosphoserine is present on residues S120, S153, S181, S188, and S193. A compositionally biased stretch (acidic residues) spans 150–163; sequence DKESEGEEEDEDED. Residues 151–328 are required for nuclear targeting; the sequence is KESEGEEEDE…SGSRSSSKKK (178 aa). A compositionally biased stretch (basic residues) spans 196-210; that stretch reads KKSNRRSRSKSRSSH. Composition is skewed to low complexity over residues 211-224 and 232-242; these read SRSSSRSSSPSSSR and RSSSSSQSRSR. Composition is skewed to basic residues over residues 251-271 and 297-312; these read SRGSKSSSRSHRGSSSPRKRS and KKRRTRSRSPERHHRS. A compositionally biased stretch (low complexity) spans 313-328; that stretch reads SSGSSHSGSRSSSKKK.

Belongs to the ZRANB2 family. As to quaternary structure, interacts with the C-terminal half of SNRNP70, the Arg/Ser-rich domain of AKAP17A as well as with U2AF1 and CLK1.

The protein resides in the nucleus. In terms of biological role, splice factor required for alternative splicing of TRA2B/SFRS10 transcripts. Binds to ssRNA containing the consensus sequence 5'-AGGUAA-3'. May interfere with constitutive 5'-splice site selection. This is Zinc finger Ran-binding domain-containing protein 2 (ZRANB2) from Sus scrofa (Pig).